Reading from the N-terminus, the 528-residue chain is Nucleolar GTP-binding protein 1 (528 aa).

Residues 168–335 enclose the OBG-type G domain; that stretch reads RTLLVCGFPN…VKAMACDLLL (168 aa). Residues 174–181, 220–224, and 287–290 contribute to the GTP site; these read GFPNVGKS, DTPGI, and SKSD. The disordered stretch occupies residues 470–528; the sequence is PDSWKHRSRNSGGDIAVHVRRDSKTQVAQPPRLPSKKKARFDDKHYYDRKPKHLYRGRK. Residues 509-518 are compositionally biased toward basic and acidic residues; it reads RFDDKHYYDR. The segment covering 519–528 has biased composition (basic residues); sequence KPKHLYRGRK.

It belongs to the TRAFAC class OBG-HflX-like GTPase superfamily. OBG GTPase family. NOG subfamily.

Its subcellular location is the nucleus. It localises to the nucleolus. Involved in the biogenesis of the 60S ribosomal subunit. This is Nucleolar GTP-binding protein 1 (NOG1) from Encephalitozoon cuniculi (strain GB-M1) (Microsporidian parasite).